The following is an 84-amino-acid chain: Small ribosomal subunit protein uS17 (84 aa).

It belongs to the universal ribosomal protein uS17 family. In terms of assembly, part of the 30S ribosomal subunit.

Functionally, one of the primary rRNA binding proteins, it binds specifically to the 5'-end of 16S ribosomal RNA. This Salmonella typhi protein is Small ribosomal subunit protein uS17.